The chain runs to 445 residues: Argininosuccinate synthase (445 aa).

Residues 17 to 25 (AFSGGLDTS) and Ala-43 each bind ATP. Tyr-99 provides a ligand contact to L-citrulline. ATP is bound by residues Gly-129 and Thr-131. Positions 131, 135, and 136 each coordinate L-aspartate. Asn-135 is an L-citrulline binding site. Position 136 (Asp-136) interacts with ATP. Residues Arg-139 and Ser-192 each contribute to the L-citrulline site. Residue Asp-194 participates in ATP binding. The L-citrulline site is built by Thr-201, Glu-203, and Glu-280.

This sequence belongs to the argininosuccinate synthase family. Type 2 subfamily. As to quaternary structure, homotetramer.

It localises to the cytoplasm. It catalyses the reaction L-citrulline + L-aspartate + ATP = 2-(N(omega)-L-arginino)succinate + AMP + diphosphate + H(+). Its pathway is amino-acid biosynthesis; L-arginine biosynthesis; L-arginine from L-ornithine and carbamoyl phosphate: step 2/3. This Ralstonia nicotianae (strain ATCC BAA-1114 / GMI1000) (Ralstonia solanacearum) protein is Argininosuccinate synthase (argG).